We begin with the raw amino-acid sequence, 521 residues long: Maturase K (521 aa).

This sequence belongs to the intron maturase 2 family. MatK subfamily.

It localises to the plastid. The protein resides in the chloroplast. Its function is as follows. Usually encoded in the trnK tRNA gene intron. Probably assists in splicing its own and other chloroplast group II introns. The chain is Maturase K from Kniphofia uvaria (Red-hot poker).